We begin with the raw amino-acid sequence, 420 residues long: Reticulon-4 receptor-like 2 (420 aa).

The N-terminal stretch at 1–46 is a signal peptide; sequence MLPGLRRLLQAPASACLLLMLLALPLAAPSCPMLCTCYSSPPTVSC. Intrachain disulfides connect C31-C37 and C35-C46. The region spanning 47 to 60 is the LRRNT domain; it reads QANNFSSVPLSLPP. N50 carries an N-linked (GlcNAc...) asparagine glycan. LRR repeat units follow at residues 61-82, 83-104, 107-129, 132-153, 156-177, 180-201, 204-225, and 228-249; these read STQRLFLQNNLIRTLRPGTFGS, NLLTLWLFSNNLSTIYPGTFRH, ALEELDLGDNRHLRSLEPDTFQG, RLQSLHLYRCQLSSLPGNIFRG, SLQYLYLQENSLLHLQDDLFAD, NLSHLFLHGNRLRLLTEHVFRG, SLDRLLLHGNRLQGVHRAAFRG, and RLTILYLFNNSLASLPGEALAD. N93 is a glycosylation site (N-linked (GlcNAc...) asparagine). N-linked (GlcNAc...) asparagine glycosylation is present at N236. The region spanning 261 to 312 is the LRRCT domain; sequence NPWACDCRARPLWAWFQRARVSSSDVTCATPPERQGRDLRALREADFQACPP. 2 disulfides stabilise this stretch: C265–C288 and C267–C310. The interval 308 to 399 is disordered; the sequence is QACPPAAPTR…CQAPPDSRGP (92 aa). The segment at 315-327 is important for interaction with MAG; the sequence is PTRPGSRARGNSS. Basic and acidic residues predominate over residues 351 to 360; it reads LPAEDSRGRQ. C390 carries GPI-anchor amidated cysteine lipidation. Positions 391–420 are cleaved as a propeptide — removed in mature form; that stretch reads QAPPDSRGPALSAGLPSPLLCLLLLVPHHL.

The protein belongs to the Nogo receptor family. As to quaternary structure, interaction with MAG is controversial, and may be indirect. Does not interact with MAG, OMG and RTN4. Interacts with MAG. In terms of processing, undergoes zinc metalloproteinase-mediated ectodomain shedding in neuroblastoma cells; is released both as a full-length ectodomain and an N-terminal fragment containing the leucine-rich repeat (LRR) region of the protein. Post-translationally, N-glycosylated. In terms of tissue distribution, highly expressed in brain and liver. Expressed at lower levels in kidney, mammary gland, placenta, skeletal muscle, spleen and thyroid.

It localises to the cell membrane. It is found in the membrane raft. The protein localises to the cell projection. Its subcellular location is the dendrite. The protein resides in the perikaryon. It localises to the axon. Functionally, cell surface receptor that plays a functionally redundant role in the inhibition of neurite outgrowth mediated by MAG. Plays a functionally redundant role in postnatal brain development. Contributes to normal axon migration across the brain midline and normal formation of the corpus callosum. Does not seem to play a significant role in regulating axon regeneration in the adult central nervous system. Protects motoneurons against apoptosis; protection against apoptosis is probably mediated by MAG. Like other family members, plays a role in restricting the number dendritic spines and the number of synapses that are formed during brain development. Signaling mediates activation of Rho and downstream reorganization of the actin cytoskeleton. In Homo sapiens (Human), this protein is Reticulon-4 receptor-like 2.